The following is a 94-amino-acid chain: Co-chaperonin GroES (94 aa).

It belongs to the GroES chaperonin family. Heptamer of 7 subunits arranged in a ring. Interacts with the chaperonin GroEL.

The protein resides in the cytoplasm. Together with the chaperonin GroEL, plays an essential role in assisting protein folding. The GroEL-GroES system forms a nano-cage that allows encapsulation of the non-native substrate proteins and provides a physical environment optimized to promote and accelerate protein folding. GroES binds to the apical surface of the GroEL ring, thereby capping the opening of the GroEL channel. The sequence is that of Co-chaperonin GroES from Lactobacillus acidophilus (strain ATCC 700396 / NCK56 / N2 / NCFM).